Reading from the N-terminus, the 183-residue chain is UPF0397 protein PBPRA2239 (183 aa).

5 consecutive transmembrane segments (helical) span residues 8 to 28, 41 to 61, 69 to 89, 110 to 130, and 147 to 167; these read VVLIAIGAALYGIGGLPMFGI, AVLALFSVLFGPLVGFLVGFI, FAGWGVWLTWVLGSGLVGLII, FALFVFLAFLGNVIGYGCSAY, and LIIIAAGNTLLIAIVGHYILT.

It belongs to the UPF0397 family.

It localises to the cell membrane. The polypeptide is UPF0397 protein PBPRA2239 (Photobacterium profundum (strain SS9)).